The chain runs to 428 residues: Enolase (428 aa).

Q163 is a binding site for (2R)-2-phosphoglycerate. E205 acts as the Proton donor in catalysis. Mg(2+) contacts are provided by D242, E284, and D311. Residues K336, R365, S366, and K387 each coordinate (2R)-2-phosphoglycerate. K336 serves as the catalytic Proton acceptor.

It belongs to the enolase family. Mg(2+) serves as cofactor.

The protein resides in the cytoplasm. The protein localises to the secreted. It localises to the cell surface. The catalysed reaction is (2R)-2-phosphoglycerate = phosphoenolpyruvate + H2O. Its pathway is carbohydrate degradation; glycolysis; pyruvate from D-glyceraldehyde 3-phosphate: step 4/5. Functionally, catalyzes the reversible conversion of 2-phosphoglycerate (2-PG) into phosphoenolpyruvate (PEP). It is essential for the degradation of carbohydrates via glycolysis. The sequence is that of Enolase from Tropheryma whipplei (strain TW08/27) (Whipple's bacillus).